A 244-amino-acid polypeptide reads, in one-letter code: tRNA (guanine-N(7)-)-methyltransferase (244 aa).

The S-adenosyl-L-methionine site is built by glutamate 75, glutamate 100, aspartate 127, and aspartate 150. Residue aspartate 150 is part of the active site. Substrate is bound by residues lysine 154, aspartate 186, and 223-226 (TRFE).

This sequence belongs to the class I-like SAM-binding methyltransferase superfamily. TrmB family.

The enzyme catalyses guanosine(46) in tRNA + S-adenosyl-L-methionine = N(7)-methylguanosine(46) in tRNA + S-adenosyl-L-homocysteine. Its pathway is tRNA modification; N(7)-methylguanine-tRNA biosynthesis. Catalyzes the formation of N(7)-methylguanine at position 46 (m7G46) in tRNA. This chain is tRNA (guanine-N(7)-)-methyltransferase, found in Xylella fastidiosa (strain 9a5c).